The sequence spans 362 residues: Microfibril-associated glycoprotein 3 (362 aa).

The first 19 residues, 1–19, serve as a signal peptide directing secretion; it reads MKLHCCLFTLVASIIVPAA. Residues 20 to 146 are Extracellular-facing; the sequence is FVLEDVDFNQ…TLRVIFTSGD (127 aa). N-linked (GlcNAc...) asparagine glycosylation is found at Asn36, Asn41, and Asn110. The Ig-like C2-type domain occupies 45–137; it reads PSSFELSASS…SPIRASYSVT (93 aa). Cysteines 73 and 124 form a disulfide. The helical transmembrane segment at 147 to 167 threads the bilayer; it reads MSVYYMIVCLIAFTITLILNV. Residues 168 to 362 are Cytoplasmic-facing; sequence TRLCMMSSHL…KDGAYENSQL (195 aa). 2 disordered regions span residues 282-306 and 319-362; these read GIYVINPEMGRSNSPGGDSDDGSLN and HLQS…NSQL. Residues 319-337 show a composition bias toward polar residues; it reads HLQSETKSIDTESQGSSHF.

Glycosylated.

It localises to the cell membrane. Its function is as follows. Component of the elastin-associated microfibrils. The sequence is that of Microfibril-associated glycoprotein 3 (MFAP3) from Pongo abelii (Sumatran orangutan).